The chain runs to 236 residues: Syntaxin-8 (236 aa).

The Cytoplasmic portion of the chain corresponds to 1-215 (MAPDPWFSTY…MVDRKSASCG (215 aa)). Residues 42 to 65 (VTIRALLQNLKEKIALLKDLLLRA) adopt a coiled-coil conformation. One can recognise a t-SNARE coiled-coil homology domain in the interval 145–207 (QKIIQEQDAG…RNETRRVNMV (63 aa)). Residue Ser160 is modified to Phosphoserine. The helical; Anchor for type IV membrane protein transmembrane segment at 216–232 (MIMVILLLLVAIVVVAV) threads the bilayer. The Vesicular portion of the chain corresponds to 233–236 (WPTN).

It belongs to the syntaxin family. As to quaternary structure, forms a SNARE complex with STX7, VTI1B and VAMP8 which functions in the homotypic fusion of late endosomes. Part of the SNARE core complex containing STX7, VAMP8 and VTI1B. Interacts with VAMP8. Interacts with HECTD3. Interacts with TPC1. In terms of processing, ubiquitinated by HECTD3. Highly expressed in heart. Also found in brain, kidney, liver, lung, placenta, skeletal muscle, spleen and pancreas.

It is found in the membrane. Its function is as follows. Vesicle trafficking protein that functions in the early secretory pathway, possibly by mediating retrograde transport from cis-Golgi membranes to the ER. The chain is Syntaxin-8 (STX8) from Homo sapiens (Human).